The sequence spans 675 residues: Acetyl-coenzyme A synthetase 1 (675 aa).

Polar residues predominate over residues 1 to 10 (MPESTQQSHL). The tract at residues 1-32 (MPESTQQSHLSLDHEKMQQPPKGFTERSKTKP) is disordered. CoA contacts are provided by residues 212 to 215 (RGGK) and Thr331. ATP-binding positions include 407-409 (GEP), 431-436 (DTYWQT), Asp522, and Arg537. Ser545 is a CoA binding site. Arg548 is an ATP binding site. CoA is bound at residue Arg609.

This sequence belongs to the ATP-dependent AMP-binding enzyme family.

It catalyses the reaction acetate + ATP + CoA = acetyl-CoA + AMP + diphosphate. The sequence is that of Acetyl-coenzyme A synthetase 1 (ACS1) from Candida albicans (Yeast).